The primary structure comprises 215 residues: MTNGISILPHTQPVYGDAAVAAMAERVVGALGPAVVSHAIAFGELTLVVQASDIVYALTYLRDDPACAFRNFIDICGVDYPQREKRFDVVYHLLSLRHNLRIRLKVQTDEVTPVPSVIEVFPAANWYERETYDLYGILFSGHPDLRRLLTDYGFEGHPLRKDFPLTGFVEVRYDQDQARVVYEPVQLTQEFRNFDFLSPWEGTDYVLPGDEKTSA.

Belongs to the complex I 30 kDa subunit family. As to quaternary structure, NDH-1 is composed of 14 different subunits. Subunits NuoB, C, D, E, F, and G constitute the peripheral sector of the complex.

Its subcellular location is the cell inner membrane. It carries out the reaction a quinone + NADH + 5 H(+)(in) = a quinol + NAD(+) + 4 H(+)(out). NDH-1 shuttles electrons from NADH, via FMN and iron-sulfur (Fe-S) centers, to quinones in the respiratory chain. The immediate electron acceptor for the enzyme in this species is believed to be ubiquinone. Couples the redox reaction to proton translocation (for every two electrons transferred, four hydrogen ions are translocated across the cytoplasmic membrane), and thus conserves the redox energy in a proton gradient. The polypeptide is NADH-quinone oxidoreductase subunit C (Methylobacterium radiotolerans (strain ATCC 27329 / DSM 1819 / JCM 2831 / NBRC 15690 / NCIMB 10815 / 0-1)).